The sequence spans 913 residues: Epithelial discoidin domain-containing receptor 1 (913 aa).

A signal peptide spans 1–18 (MGPEALSSLLLLLLVASG). The Extracellular segment spans residues 21–417 (DMKGHFDPAK…VAKAEGSPTA (397 aa)). The F5/8 type C domain occupies 31–185 (CRYALGMQDR…VCLRVELYGC (155 aa)). 2 disulfide bridges follow: Cys-31-Cys-185 and Cys-74-Cys-177. The tract at residues 192–367 (LSYTAPVGQT…LFSEISFISD (176 aa)) is DS-like domain. Residues Asn-211, Gln-230, Asp-233, Val-235, Tyr-253, and Tyr-255 each coordinate Ca(2+). Asn-211 carries N-linked (GlcNAc...) asparagine glycosylation. N-linked (GlcNAc...) asparagine glycosylation is present at Asn-260. Residues Cys-303 and Cys-348 are joined by a disulfide bond. The Ca(2+) site is built by Ser-360 and Glu-361. N-linked (GlcNAc...) asparagine glycans are attached at residues Asn-370 and Asn-394. The helical transmembrane segment at 418–438 (ILIGCLVAIILLLLLIIALML) threads the bilayer. Over 439–913 (WRLHWRRLLS…FLAEDALNTV (475 aa)) the chain is Cytoplasmic. The segment at 470-499 (ILINNRPGPREPPPYQEPRPRGNPPHSAPC) is disordered. The span at 479 to 496 (REPPPYQEPRPRGNPPHS) shows a compositional bias: pro residues. The PPxY motif signature appears at 481–484 (PPPY). A phosphotyrosine; by autocatalysis mark is found at Tyr-484, Tyr-513, and Tyr-520. In terms of domain architecture, Protein kinase spans 610–905 (LRFKEKLGEG…PPFSQLHRFL (296 aa)). 616 to 624 (LGEGQFGEV) contributes to the ATP binding site. The residue at position 631 (Ser-631) is a Phosphoserine. Residue Lys-655 participates in ATP binding. At Tyr-740 the chain carries Phosphotyrosine; by autocatalysis. Asp-766 functions as the Proton acceptor in the catalytic mechanism. Phosphotyrosine; by autocatalysis is present on residues Tyr-792, Tyr-796, and Tyr-797.

This sequence belongs to the protein kinase superfamily. Tyr protein kinase family. Insulin receptor subfamily. In terms of assembly, homodimer. Interacts (via PPxY motif) with WWC1 (via WW domains) in a collagen-regulated manner. Forms a tripartite complex with WWC1 and PRKCZ, but predominantly in the absence of collagen. Interacts (tyrosine phosphorylated) with SHC1. Interacts with SRC. Interacts with MYH9. Interacts with CDH1. Interacts with PTPN11. Interacts with NCK2. Autophosphorylated in response to fibrillar collagen binding. In terms of processing, glycosylation of Asn-211, but apparently not of Asn-260 or Asn-394, prevents autophosphorylation from occurring in the absence of collagen. Detected in T-47D, MDA-MB-175 and HBL-100 breast carcinoma cells, A-431 epidermoid carcinoma cells, SW48 and SNU-C2B colon carcinoma cells and Hs 294T melanoma cells (at protein level). Expressed at low levels in most adult tissues and is highest in the brain, lung, placenta and kidney. Lower levels of expression are detected in melanocytes, heart, liver, skeletal muscle and pancreas. Abundant in breast carcinoma cell lines. In the colonic mucosa, expressed in epithelia but not in the connective tissue of the lamina propria. In the thyroid gland, expressed in the epithelium of the thyroid follicles. In pancreas, expressed in the islets of Langerhans cells, but not in the surrounding epithelial cells of the exocrine pancreas. In kidney, expressed in the epithelia of the distal tubules. Not expressed in connective tissue, endothelial cells, adipose tissue, muscle cells or cells of hematopoietic origin.

Its subcellular location is the cell membrane. It localises to the secreted. It carries out the reaction L-tyrosyl-[protein] + ATP = O-phospho-L-tyrosyl-[protein] + ADP + H(+). Its activity is regulated as follows. Inhibited by the multi-targeted cancer drugs imatinib and ponatinib. In terms of biological role, tyrosine kinase that functions as a cell surface receptor for fibrillar collagen and regulates cell attachment to the extracellular matrix, remodeling of the extracellular matrix, cell migration, differentiation, survival and cell proliferation. Collagen binding triggers a signaling pathway that involves SRC and leads to the activation of MAP kinases. Regulates remodeling of the extracellular matrix by up-regulation of the matrix metalloproteinases MMP2, MMP7 and MMP9, and thereby facilitates cell migration and wound healing. Required for normal blastocyst implantation during pregnancy, for normal mammary gland differentiation and normal lactation. Required for normal ear morphology and normal hearing. Promotes smooth muscle cell migration, and thereby contributes to arterial wound healing. Also plays a role in tumor cell invasion. Phosphorylates PTPN11. The chain is Epithelial discoidin domain-containing receptor 1 (DDR1) from Homo sapiens (Human).